The following is a 280-amino-acid chain: Probable endonuclease 4 (280 aa).

Zn(2+) is bound by residues H77, H117, E148, D180, H183, H215, D228, H230, and E259.

Belongs to the AP endonuclease 2 family. Zn(2+) serves as cofactor.

It carries out the reaction Endonucleolytic cleavage to 5'-phosphooligonucleotide end-products.. Endonuclease IV plays a role in DNA repair. It cleaves phosphodiester bonds at apurinic or apyrimidinic (AP) sites, generating a 3'-hydroxyl group and a 5'-terminal sugar phosphate. The chain is Probable endonuclease 4 from Thermoplasma volcanium (strain ATCC 51530 / DSM 4299 / JCM 9571 / NBRC 15438 / GSS1).